The sequence spans 345 residues: DNA primase small subunit PriS (345 aa).

Active-site residues include D95 and D97. Zn(2+) contacts are provided by C106, H108, C114, and C117. A Zinc knuckle motif motif is present at residues 106–117 (CNHEPGKVCPIC). Residue D280 is part of the active site.

It belongs to the eukaryotic-type primase small subunit family. As to quaternary structure, heterodimer of a small subunit (PriS) and a large subunit (PriL). Mg(2+) is required as a cofactor. It depends on Mn(2+) as a cofactor.

Its function is as follows. Catalytic subunit of DNA primase, an RNA polymerase that catalyzes the synthesis of short RNA molecules used as primers for DNA polymerase during DNA replication. The small subunit contains the primase catalytic core and has DNA synthesis activity on its own, synthesizing DNA strands up to 3 kB. Binding to the large subunit stabilizes and modulates the activity, increasing the rate of DNA synthesis while decreasing the length of the DNA fragments, and conferring RNA synthesis capability for RNA fragments up to 150 bases. The DNA polymerase activity may enable DNA primase to also catalyze primer extension after primer synthesis. May also play a role in DNA repair. Displays gap-filling and strand-displacement activities. This is DNA primase small subunit PriS from Pyrococcus abyssi (strain GE5 / Orsay).